Here is a 322-residue protein sequence, read N- to C-terminus: ATP-dependent 6-phosphofructokinase (322 aa).

Gly11 contributes to the ATP binding site. Residue 21–25 (RAVVR) participates in ADP binding. Residues 72 to 73 (RC) and 102 to 105 (GDGS) contribute to the ATP site. Mg(2+) is bound at residue Asp103. 127–129 (TID) is a binding site for substrate. Asp129 serves as the catalytic Proton acceptor. Arg156 lines the ADP pocket. Substrate contacts are provided by residues Arg164 and 171-173 (MGR). ADP contacts are provided by residues 187 to 189 (GAE), Arg213, and 215 to 217 (KKH). Residues Glu224, Arg245, and 251 to 254 (HVQR) contribute to the substrate site.

It belongs to the phosphofructokinase type A (PFKA) family. ATP-dependent PFK group I subfamily. Prokaryotic clade 'B1' sub-subfamily. Homotetramer. Mg(2+) serves as cofactor.

It is found in the cytoplasm. The enzyme catalyses beta-D-fructose 6-phosphate + ATP = beta-D-fructose 1,6-bisphosphate + ADP + H(+). It participates in carbohydrate degradation; glycolysis; D-glyceraldehyde 3-phosphate and glycerone phosphate from D-glucose: step 3/4. With respect to regulation, allosterically activated by ADP and other diphosphonucleosides, and allosterically inhibited by phosphoenolpyruvate. Functionally, catalyzes the phosphorylation of D-fructose 6-phosphate to fructose 1,6-bisphosphate by ATP, the first committing step of glycolysis. The protein is ATP-dependent 6-phosphofructokinase of Staphylococcus aureus (strain MRSA252).